The primary structure comprises 446 residues: Phosphoglucosamine mutase (446 aa).

Catalysis depends on serine 99, which acts as the Phosphoserine intermediate. 4 residues coordinate Mg(2+): serine 99, aspartate 242, aspartate 244, and aspartate 246. Serine 99 carries the post-translational modification Phosphoserine.

Belongs to the phosphohexose mutase family. It depends on Mg(2+) as a cofactor. Post-translationally, activated by phosphorylation.

It carries out the reaction alpha-D-glucosamine 1-phosphate = D-glucosamine 6-phosphate. Functionally, catalyzes the conversion of glucosamine-6-phosphate to glucosamine-1-phosphate. This chain is Phosphoglucosamine mutase, found in Campylobacter concisus (strain 13826).